Consider the following 251-residue polypeptide: Transmembrane ascorbate-dependent reductase CYB561 (251 aa).

At Met1 the chain carries N-acetylmethionine. Residues 1-16 lie on the Cytoplasmic side of the membrane; the sequence is MEGGAAAATPTALPYY. A helical membrane pass occupies residues 17 to 37; the sequence is VAFSQLLGLTLVAMTGAWLGL. The Cytochrome b561 domain maps to 19-220; that stretch reads FSQLLGLTLV…FGGAVLYILT (202 aa). Topologically, residues 38 to 51 are vesicular; the sequence is YRGGIAWESDLQFN. The chain crosses the membrane as a helical span at residues 52–72; it reads AHPLCMVIGLIFLQGNALLVY. The heme b site is built by His53, Arg73, and Lys80. Topologically, residues 73 to 85 are cytoplasmic; the sequence is RVFRNEAKRTTKV. L-ascorbate-binding residues include Lys80 and Lys84. Residues 86 to 106 form a helical membrane-spanning segment; sequence LHGLLHIFALVIALVGLVAVF. Heme b is bound by residues His87, 116-119, and His121; that span reads DLYS. Residues 107–124 are Vesicular-facing; the sequence is DYHRKKGYADLYSLHSWC. Residues 125 to 145 form a helical membrane-spanning segment; sequence GILVFVLYFVQWLVGFSFFLF. Residues 146–158 are Cytoplasmic-facing; it reads PGASFSLRSRYRP. L-ascorbate is bound at residue Arg153. A helical membrane pass occupies residues 159–179; the sequence is QHIFFGATIFLLSVGTALLGL. The heme b site is built by His160 and Glu181. Over 180-198 the chain is Vesicular; that stretch reads KEALLFNLGGKYSAFEPEG. The helical transmembrane segment at 199–219 threads the bilayer; it reads VLANVLGLLLACFGGAVLYIL. At 220-251 the chain is on the cytoplasmic side; that stretch reads TRADWKRPSQAEEQALSMDFKTLTEGDSPGSQ. Lys225 serves as a coordination point for heme b. Ser247 carries the phosphoserine modification.

The cofactor is heme b. As to expression, expressed in many tissues, in particular the brain especially in the cortex and hippocampus.

The protein localises to the cytoplasmic vesicle. It is found in the secretory vesicle. It localises to the chromaffin granule membrane. It catalyses the reaction monodehydro-L-ascorbate radical(out) + L-ascorbate(in) = monodehydro-L-ascorbate radical(in) + L-ascorbate(out). In terms of biological role, transmembrane reductase that uses ascorbate as an electron donor in the cytoplasm and transfers electrons across membranes to reduce monodehydro-L-ascorbate radical in the lumen of secretory vesicles. It is therefore involved the regeneration and homeostasis within secretory vesicles of ascorbate which in turn provides reducing equivalents needed to support the activity of intravesicular enzymes. This is Transmembrane ascorbate-dependent reductase CYB561 from Homo sapiens (Human).